Reading from the N-terminus, the 159-residue chain is Protransforming growth factor alpha (159 aa).

The N-terminal stretch at 1–23 (MVPAAGQLALLALGILVAVCQAL) is a signal peptide. Positions 24 to 38 (ENSTSPLSDSPVAAA) are cleaved as a propeptide — removed in mature form. Over 24–97 (ENSTSPLSDS…AVVAASQKKQ (74 aa)) the chain is Extracellular. An N-linked (GlcNAc...) asparagine glycan is attached at Asn25. The 41-residue stretch at 42-82 (HFNKCPDSHTQYCFHGTCRFLVQEEKPACVCHSGYVGVRCE) folds into the EGF-like domain. Cystine bridges form between Cys46–Cys59, Cys54–Cys70, and Cys72–Cys81. The propeptide at 89-159 (VVAASQKKQA…TACCHSETVV (71 aa)) is removed in mature form. Residues 98–123 (AITALVVVSIVALAVLIITCVLIHCC) traverse the membrane as a helical segment. Topologically, residues 124 to 159 (QVRKHCEWCRALVCRHEKPSALLKGRTACCHSETVV) are cytoplasmic. Residues Cys152 and Cys153 are each lipidated (S-palmitoyl cysteine).

In terms of assembly, interacts with the PDZ domains of MAGI3, SDCBP and SNTA1. The interaction with SDCBP, is required for the targeting to the cell surface. In the endoplasmic reticulum, in its immature form (i.e. with a prosegment and lacking full N-glycosylation), interacts with CNIH. In the Golgi apparatus, may form a complex with CNIH and GORASP2. Interacts (via cytoplasmic C-terminal domain) with NKD2.

The protein localises to the secreted. The protein resides in the extracellular space. Its subcellular location is the cell membrane. In terms of biological role, TGF alpha is a mitogenic polypeptide that is able to bind to the EGF receptor/EGFR and to act synergistically with TGF beta to promote anchorage-independent cell proliferation in soft agar. In Rattus norvegicus (Rat), this protein is Protransforming growth factor alpha (Tgfa).